A 986-amino-acid chain; its full sequence is Zinc finger protein 445 (986 aa).

Residues 52-134 form the SCAN box domain; sequence RQLFRQLRYH…ALLEELQRDL (83 aa). Residues 219 to 289 enclose the KRAB domain; the sequence is LTFQDVEVTF…NICTVQLKRD (71 aa). Glycyl lysine isopeptide (Lys-Gly) (interchain with G-Cter in SUMO2) cross-links involve residues Lys302, Lys360, and Lys385. Residues 433–460 are disordered; sequence QNTGLKENGKDRYGETSRKSWHAHPEHR. Positions 439 to 460 are enriched in basic and acidic residues; it reads ENGKDRYGETSRKSWHAHPEHR. C2H2-type zinc fingers lie at residues 470-492 and 498-520; these read FQCR…EKIH and YQCS…QKTH. A Glycyl lysine isopeptide (Lys-Gly) (interchain with G-Cter in SUMO2) cross-link involves residue Lys524. 2 C2H2-type zinc fingers span residues 553–575 and 581–604; these read LHCN…QRIH and YKCT…KLHH. Lys609 is covalently cross-linked (Glycyl lysine isopeptide (Lys-Gly) (interchain with G-Cter in SUMO2)). C2H2-type zinc fingers lie at residues 634–656 and 662–686; these read FPCQ…QRIH and YQCS…RTQH. A Glycyl lysine isopeptide (Lys-Gly) (interchain with G-Cter in SUMO2) cross-link involves residue Lys691. 4 consecutive C2H2-type zinc fingers follow at residues 718-740, 746-768, 796-818, and 824-846; these read NKCK…ERVH, YQCR…QRKH, FWCQ…KGIH, and FKCN…QRIH. Lys929 is covalently cross-linked (Glycyl lysine isopeptide (Lys-Gly) (interchain with G-Cter in SUMO2)). C2H2-type zinc fingers lie at residues 933-955 and 961-983; these read HKCS…KRCH and FKCI…MKNH.

It belongs to the krueppel C2H2-type zinc-finger protein family.

It is found in the nucleus. In terms of biological role, transcription regulator required to maintain maternal and paternal gene imprinting, a process by which gene expression is restricted in a parent of origin-specific manner by epigenetic modification of genomic DNA and chromatin, including DNA methylation. Acts by controlling DNA methylation during the earliest multicellular stages of development at multiple imprinting control regions (ICRs). Acts together with ZFP57, but ZFP57 plays the predominant role in imprinting maintenance. In contrast, ZNF445 seems to be the major factor in human early embryonic imprinting maintenance. This chain is Zinc finger protein 445 (Znf445), found in Mus musculus (Mouse).